We begin with the raw amino-acid sequence, 62 residues long: Photosystem II reaction center protein Z (62 aa).

2 helical membrane passes run 8–28 (AVFALIATSSILLISVPVVFA) and 41–61 (FSGTSLWIGLVFLVAILNSLI).

It belongs to the PsbZ family. As to quaternary structure, PSII is composed of 1 copy each of membrane proteins PsbA, PsbB, PsbC, PsbD, PsbE, PsbF, PsbH, PsbI, PsbJ, PsbK, PsbL, PsbM, PsbT, PsbY, PsbZ, Psb30/Ycf12, at least 3 peripheral proteins of the oxygen-evolving complex and a large number of cofactors. It forms dimeric complexes.

Its subcellular location is the plastid. The protein localises to the chloroplast thylakoid membrane. In terms of biological role, may control the interaction of photosystem II (PSII) cores with the light-harvesting antenna, regulates electron flow through the 2 photosystem reaction centers. PSII is a light-driven water plastoquinone oxidoreductase, using light energy to abstract electrons from H(2)O, generating a proton gradient subsequently used for ATP formation. This chain is Photosystem II reaction center protein Z, found in Calycanthus floridus var. glaucus (Eastern sweetshrub).